We begin with the raw amino-acid sequence, 855 residues long: Vomeronasal type-2 receptor 26 (855 aa).

Positions 1 to 22 (MKLLTAFSPLVVLILFQEQISC) are cleaved as a signal peptide. The Extracellular portion of the chain corresponds to 23-595 (YYLTKYASSG…FLAHEDPLGT (573 aa)). N-linked (GlcNAc...) asparagine glycans are attached at residues asparagine 101 and asparagine 295. The chain crosses the membrane as a helical span at residues 596–616 (VLVSLAISLSAFSAMILGLFI). Over 617-630 (CYRETPIVRANNRN) the chain is Cytoplasmic. A helical transmembrane segment spans residues 631-651 (LSYLLLISLKLCFSCSLMFIG). Topologically, residues 652–662 (QPRTVTCVLRQ) are extracellular. A helical transmembrane segment spans residues 663-683 (IIFGIVFSIVISAILAKTFIV). The Cytoplasmic portion of the chain corresponds to 684–706 (VMAFKAIKPGSILKMGMVTRLSN). A helical membrane pass occupies residues 707-727 (AIVCCGSIIQVCICAVWLGTY). Over 728-753 (PPFPDVDMHSEFGQIILWCNEGSTLA) the chain is Extracellular. A helical transmembrane segment spans residues 754-774 (FYCVLGYLGFLASLSLLIAFL). Residues 775 to 786 (ARRLPDSFNEAK) are Cytoplasmic-facing. A helical membrane pass occupies residues 787–807 (TITFSMLVFCSVWISFVPAYL). At 808–814 (SSKGKTM) the chain is on the extracellular side. The chain crosses the membrane as a helical span at residues 815 to 835 (VAVEILSILASSAGLLGCIFL). At 836-855 (PKCYVILLKSGGHSRKKFFK) the chain is on the cytoplasmic side.

This sequence belongs to the G-protein coupled receptor 3 family. As to expression, expressed in the basal epithelium of the vomeronasal organ. Located to vomeronasal sensory neurons that project their axons to six to ten glomeruli that reside in globally conserved areas within the caudal accessory olfactory bulb (AOB).

It is found in the cell membrane. In terms of biological role, putative pheromone receptor. This Mus musculus (Mouse) protein is Vomeronasal type-2 receptor 26 (Vmn2r26).